A 335-amino-acid chain; its full sequence is GTPase Obg (335 aa).

In terms of domain architecture, Obg spans 1 to 159 (MKFVDSAKIS…YELEMELKLM (159 aa)). Positions 160–323 (ADVGLVGFPN…LKDELWRQVS (164 aa)) constitute an OBG-type G domain. Residues 166–173 (GFPNAGKS), 191–195 (FTTLV), 213–216 (DIPG), 280–283 (TKMD), and 304–306 (SSV) contribute to the GTP site. 2 residues coordinate Mg(2+): S173 and T193.

This sequence belongs to the TRAFAC class OBG-HflX-like GTPase superfamily. OBG GTPase family. In terms of assembly, monomer. It depends on Mg(2+) as a cofactor.

The protein localises to the cytoplasm. Functionally, an essential GTPase which binds GTP, GDP and possibly (p)ppGpp with moderate affinity, with high nucleotide exchange rates and a fairly low GTP hydrolysis rate. Plays a role in control of the cell cycle, stress response, ribosome biogenesis and in those bacteria that undergo differentiation, in morphogenesis control. The sequence is that of GTPase Obg from Chlorobaculum tepidum (strain ATCC 49652 / DSM 12025 / NBRC 103806 / TLS) (Chlorobium tepidum).